Consider the following 126-residue polypeptide: Holo-[acyl-carrier-protein] synthase (126 aa).

Residues aspartate 9 and glutamate 57 each contribute to the Mg(2+) site.

The protein belongs to the P-Pant transferase superfamily. AcpS family. The cofactor is Mg(2+).

The protein resides in the cytoplasm. It carries out the reaction apo-[ACP] + CoA = holo-[ACP] + adenosine 3',5'-bisphosphate + H(+). Transfers the 4'-phosphopantetheine moiety from coenzyme A to a Ser of acyl-carrier-protein. In Alteromonas mediterranea (strain DSM 17117 / CIP 110805 / LMG 28347 / Deep ecotype), this protein is Holo-[acyl-carrier-protein] synthase.